Reading from the N-terminus, the 326-residue chain is Lipoyl synthase (326 aa).

7 residues coordinate [4Fe-4S] cluster: Cys56, Cys61, Cys67, Cys82, Cys86, Cys89, and Ser298. Positions 68 to 287 constitute a Radical SAM core domain; sequence WEDREATFLI…KDEADAIGYS (220 aa).

This sequence belongs to the radical SAM superfamily. Lipoyl synthase family. Requires [4Fe-4S] cluster as cofactor.

It is found in the cytoplasm. The enzyme catalyses [[Fe-S] cluster scaffold protein carrying a second [4Fe-4S](2+) cluster] + N(6)-octanoyl-L-lysyl-[protein] + 2 oxidized [2Fe-2S]-[ferredoxin] + 2 S-adenosyl-L-methionine + 4 H(+) = [[Fe-S] cluster scaffold protein] + N(6)-[(R)-dihydrolipoyl]-L-lysyl-[protein] + 4 Fe(3+) + 2 hydrogen sulfide + 2 5'-deoxyadenosine + 2 L-methionine + 2 reduced [2Fe-2S]-[ferredoxin]. The protein operates within protein modification; protein lipoylation via endogenous pathway; protein N(6)-(lipoyl)lysine from octanoyl-[acyl-carrier-protein]: step 2/2. Catalyzes the radical-mediated insertion of two sulfur atoms into the C-6 and C-8 positions of the octanoyl moiety bound to the lipoyl domains of lipoate-dependent enzymes, thereby converting the octanoylated domains into lipoylated derivatives. This is Lipoyl synthase from Streptomyces griseus subsp. griseus (strain JCM 4626 / CBS 651.72 / NBRC 13350 / KCC S-0626 / ISP 5235).